A 569-amino-acid polypeptide reads, in one-letter code: Potassium-transporting ATPase potassium-binding subunit (569 aa).

Helical transmembrane passes span Gly5–Val25, Gly65–Leu85, Leu135–Leu155, Leu179–Pro199, Leu254–Phe274, Ala286–Glu306, Gly383–Gly403, Leu422–Leu442, Met489–Gly509, and Gly528–Phe548.

The protein belongs to the KdpA family. The system is composed of three essential subunits: KdpA, KdpB and KdpC.

The protein resides in the cell inner membrane. In terms of biological role, part of the high-affinity ATP-driven potassium transport (or Kdp) system, which catalyzes the hydrolysis of ATP coupled with the electrogenic transport of potassium into the cytoplasm. This subunit binds the periplasmic potassium ions and delivers the ions to the membrane domain of KdpB through an intramembrane tunnel. The sequence is that of Potassium-transporting ATPase potassium-binding subunit from Caulobacter sp. (strain K31).